A 384-amino-acid polypeptide reads, in one-letter code: S-adenosylmethionine synthase (384 aa).

His-15 provides a ligand contact to ATP. Residue Asp-17 coordinates Mg(2+). Glu-43 is a K(+) binding site. The L-methionine site is built by Glu-56 and Gln-99. Positions Gln-99–Arg-109 are flexible loop. ATP is bound by residues Asp-164 to Lys-166, Arg-230 to Phe-231, Asp-239, Arg-245 to Lys-246, Ala-262, and Lys-266. Residue Asp-239 participates in L-methionine binding. Lys-270 serves as a coordination point for L-methionine.

This sequence belongs to the AdoMet synthase family. Homotetramer; dimer of dimers. Mg(2+) is required as a cofactor. K(+) serves as cofactor.

Its subcellular location is the cytoplasm. It catalyses the reaction L-methionine + ATP + H2O = S-adenosyl-L-methionine + phosphate + diphosphate. It functions in the pathway amino-acid biosynthesis; S-adenosyl-L-methionine biosynthesis; S-adenosyl-L-methionine from L-methionine: step 1/1. Catalyzes the formation of S-adenosylmethionine (AdoMet) from methionine and ATP. The overall synthetic reaction is composed of two sequential steps, AdoMet formation and the subsequent tripolyphosphate hydrolysis which occurs prior to release of AdoMet from the enzyme. This Shigella boydii serotype 18 (strain CDC 3083-94 / BS512) protein is S-adenosylmethionine synthase.